The following is a 417-amino-acid chain: UDP-N-acetylglucosamine 1-carboxyvinyltransferase 2 (417 aa).

Residue 22 to 23 (KN) coordinates phosphoenolpyruvate. Residue R94 participates in UDP-N-acetyl-alpha-D-glucosamine binding. C118 functions as the Proton donor in the catalytic mechanism. C118 is modified (2-(S-cysteinyl)pyruvic acid O-phosphothioketal). UDP-N-acetyl-alpha-D-glucosamine is bound by residues 123 to 127 (RPIDL), D306, and I328.

Belongs to the EPSP synthase family. MurA subfamily.

Its subcellular location is the cytoplasm. It catalyses the reaction phosphoenolpyruvate + UDP-N-acetyl-alpha-D-glucosamine = UDP-N-acetyl-3-O-(1-carboxyvinyl)-alpha-D-glucosamine + phosphate. Its pathway is cell wall biogenesis; peptidoglycan biosynthesis. Functionally, cell wall formation. Adds enolpyruvyl to UDP-N-acetylglucosamine. The protein is UDP-N-acetylglucosamine 1-carboxyvinyltransferase 2 of Clostridium tetani (strain Massachusetts / E88).